A 439-amino-acid polypeptide reads, in one-letter code: UPF0229 protein Nham_0975 (439 aa).

The tract at residues 39–106 (RSGRISDADG…AGTPDPSMKD (68 aa)) is disordered. Residues 58 to 76 (STDEPRFEAAKDSGRREHV) are compositionally biased toward basic and acidic residues.

Belongs to the UPF0229 family.

In Nitrobacter hamburgensis (strain DSM 10229 / NCIMB 13809 / X14), this protein is UPF0229 protein Nham_0975.